A 460-amino-acid chain; its full sequence is Elongation factor 1-alpha (460 aa).

N,N,N-trimethylglycine is present on G2. N6,N6-dimethyllysine; alternate is present on K3. K3 bears the N6-methyllysine; alternate mark. Residues 6-241 (KTHINVVVIG…DAIEPPKRPT (236 aa)) enclose the tr-type G domain. The tract at residues 15–22 (GHVDSGKS) is G1. GTP is bound at residue 15 to 22 (GHVDSGKS). K31 bears the N6-methyllysine mark. Residues 71 to 75 (GITID) form a G2 region. The residue at position 80 (K80) is an N6,N6,N6-trimethyllysine. A G3 region spans residues 92-95 (DAPG). GTP-binding positions include 92 to 96 (DAPGH) and 154 to 157 (NKMD). The interval 154 to 157 (NKMD) is G4. The segment at 193 to 195 (SGF) is G5. The residue at position 317 (K317) is an N6,N6-dimethyllysine; alternate. K317 bears the N6-methyllysine; alternate mark. K391 carries the post-translational modification N6-methyllysine.

This sequence belongs to the TRAFAC class translation factor GTPase superfamily. Classic translation factor GTPase family. EF-Tu/EF-1A subfamily.

The protein localises to the cytoplasm. This protein promotes the GTP-dependent binding of aminoacyl-tRNA to the A-site of ribosomes during protein biosynthesis. The polypeptide is Elongation factor 1-alpha (tef-1) (Neurospora crassa (strain ATCC 24698 / 74-OR23-1A / CBS 708.71 / DSM 1257 / FGSC 987)).